Consider the following 512-residue polypeptide: Glutathione-binding protein GsiB (512 aa).

A signal peptide spans Met-1–Ala-26.

Belongs to the bacterial solute-binding protein 5 family. As to quaternary structure, the complex is composed of two ATP-binding proteins (GsiA), two transmembrane proteins (GsiC and GsiD) and a solute-binding protein (GsiB).

The protein localises to the periplasm. Functionally, part of the ABC transporter complex GsiABCD involved in glutathione import. Binds glutathione. This is Glutathione-binding protein GsiB from Salmonella typhi.